Consider the following 443-residue polypeptide: Ribosomal protein uS12 methylthiotransferase RimO (443 aa).

Residues 8–118 form the MTTase N-terminal domain; it reads PKVGFVSLGC…VVNAVHEVVP (111 aa). Positions 17, 53, 82, 151, 155, and 158 each coordinate [4Fe-4S] cluster. One can recognise a Radical SAM core domain in the interval 137 to 376; it reads LTPRHYAYLK…AHQQAISSAR (240 aa). Residues 378-443 form the TRAM domain; that stretch reads QLRIGKEIEV…DEYDMWAEPV (66 aa).

This sequence belongs to the methylthiotransferase family. RimO subfamily. Requires [4Fe-4S] cluster as cofactor.

The protein resides in the cytoplasm. The catalysed reaction is L-aspartate(89)-[ribosomal protein uS12]-hydrogen + (sulfur carrier)-SH + AH2 + 2 S-adenosyl-L-methionine = 3-methylsulfanyl-L-aspartate(89)-[ribosomal protein uS12]-hydrogen + (sulfur carrier)-H + 5'-deoxyadenosine + L-methionine + A + S-adenosyl-L-homocysteine + 2 H(+). In terms of biological role, catalyzes the methylthiolation of an aspartic acid residue of ribosomal protein uS12. This Pseudomonas putida (strain W619) protein is Ribosomal protein uS12 methylthiotransferase RimO.